We begin with the raw amino-acid sequence, 208 residues long: Large ribosomal subunit protein uL3 (208 aa).

Residues 123–147 (RHGQSRGPMAHGSRYHRRPGSMGPV) form a disordered region.

It belongs to the universal ribosomal protein uL3 family. As to quaternary structure, part of the 50S ribosomal subunit. Forms a cluster with proteins L14 and L19.

Functionally, one of the primary rRNA binding proteins, it binds directly near the 3'-end of the 23S rRNA, where it nucleates assembly of the 50S subunit. This is Large ribosomal subunit protein uL3 from Streptococcus sanguinis (strain SK36).